The following is a 222-amino-acid chain: Eukaryotic translation initiation factor 3 subunit K (222 aa).

The 163-residue stretch at 46 to 208 (YDLEANLAVL…KIKTKNITEK (163 aa)) folds into the PCI domain.

The protein belongs to the eIF-3 subunit K family. Component of the eukaryotic translation initiation factor 3 (eIF-3) complex. The eIF-3 complex interacts with pix.

It is found in the cytoplasm. Component of the eukaryotic translation initiation factor 3 (eIF-3) complex, which is involved in protein synthesis of a specialized repertoire of mRNAs and, together with other initiation factors, stimulates binding of mRNA and methionyl-tRNAi to the 40S ribosome. The eIF-3 complex specifically targets and initiates translation of a subset of mRNAs involved in cell proliferation. This chain is Eukaryotic translation initiation factor 3 subunit K, found in Drosophila yakuba (Fruit fly).